Reading from the N-terminus, the 477-residue chain is Trigger factor (477 aa).

Positions 169 to 254 constitute a PPIase FKBP-type domain; that stretch reads EDRVTIDYLG…VKEVAKPNEL (86 aa). The interval 435–477 is disordered; that stretch reads VSKEELTAEDEDAASEAKPAKKAAAKKKAAPKKKAEEGKSEEA. The segment covering 454–466 has biased composition (basic residues); sequence AKKAAAKKKAAPK. The segment covering 467-477 has biased composition (basic and acidic residues); it reads KKAEEGKSEEA.

The protein belongs to the FKBP-type PPIase family. Tig subfamily.

It is found in the cytoplasm. The catalysed reaction is [protein]-peptidylproline (omega=180) = [protein]-peptidylproline (omega=0). Involved in protein export. Acts as a chaperone by maintaining the newly synthesized protein in an open conformation. Functions as a peptidyl-prolyl cis-trans isomerase. This is Trigger factor from Brucella suis biovar 1 (strain 1330).